Reading from the N-terminus, the 589-residue chain is MTYTKKKYTPKTKEQIKEETKEIMDKVLTDITKYYNSPEDMLELANFMAQFSNYSPRNMQLIKSQFPHAYACASFKTFKDAGFHVNKGEKAMKVFHPYVKEFVRDPKTKLPIPLTKLTAEQKQQVKNGELKVEKQTNYYLKATAFDISQTNASPEDLPKIFPNRQFNFEVTEENKELLKLGIQALAEKENIKIKDMGQGALIKELGTIHGAYVEVADSSFAQIVMNTRNTETKELSVAIHELAHAKLHNKKVASLEHVPTEEFEAELTSYIVCKHYGMDTSEASVPYIAEWTKNGQDIEEKDKSIMRVHETASSFINTIDKKISELQREREKNREQNKKEIEDVYVVRYGALTSTEEKIITVRELRERADRDKSYSDVENANTLNDKEYIEAFNKANEENCIALEHNEIKKLMVVIQWSEADLEKNKAIPFGEANAIMSKRIAEIDAESKRAEEKGEYVPYEKTRYHLILPKEMDKDFNRMEVVTMDRLDLGDGIYKSPYEQILNEKRQLSDEVKQALQQEINEYEQTKGQSNPEKLRAVNTTEISEIQQGKVDRFLSNKTEKDEDAAAIKQQEARRMARMAYMQRMER.

This is an uncharacterized protein from Bacillus anthracis.